The sequence spans 347 residues: Intracellular hyaluronan-binding protein 4 (347 aa).

Disordered stretches follow at residues 39–221 and 298–347; these read GTEK…PSET and FGSL…PALA. 4 stretches are compositionally biased toward basic and acidic residues: residues 61 to 71, 83 to 107, 116 to 125, and 146 to 174; these read VKKESQRDRKT, PGHE…DAEK, RPVDVLDRPA, and DGFD…EKRS. Residues 199-213 are compositionally biased toward acidic residues; the sequence is EVTENEETQEAVETD. Positions 307–319 are enriched in gly residues; the sequence is GGRGGRGGRGRGG. Residues 338-347 are compositionally biased toward acidic residues; the sequence is DDPEDFPALA.

This sequence belongs to the SERBP1-HABP4 family. Associates with ribosomes; promoting ribosome stabilization. Interacts with eef2/eEF2; promoting ribosome stabilization.

The protein resides in the nucleus. It localises to the cytoplasm. Its subcellular location is the stress granule. The protein localises to the nucleolus. It is found in the nucleus speckle. The protein resides in the cajal body. Ribosome-binding protein that promotes ribosome hibernation, a process during which ribosomes are stabilized in an inactive state and preserved from proteasomal degradation. Acts via its association with eef2/eEF2 factor at the A-site of the ribosome, promoting ribosome stabilization in an inactive state compatible with storage. Plays a key role in ribosome hibernation in the mature egg by promoting ribosome stabilization. Ribosomes, which are produced in large quantities during oogenesis, are stored and translationally repressed in the egg and early embryo. This chain is Intracellular hyaluronan-binding protein 4, found in Danio rerio (Zebrafish).